The following is an 804-amino-acid chain: Ribonucleoside-diphosphate reductase large subunit-like protein (804 aa).

The protein belongs to the ribonucleoside diphosphate reductase large chain family.

Its subcellular location is the virion. The protein resides in the host cytoplasm. Its function is as follows. Does not possess a ribonucleotide reductase activity. Betaherpesviruses probably use another strategy to expand the dNTP pool in a quiescent host cell. In Homo sapiens (Human), this protein is Ribonucleoside-diphosphate reductase large subunit-like protein.